Here is a 507-residue protein sequence, read N- to C-terminus: AMSH-like ubiquitin thioesterase 1 (507 aa).

The region spanning 333 to 463 is the MPN domain; sequence LHIATSMMDT…IFRLTTPGGM (131 aa). Positions 411, 413, 424, 426, 469, 475, and 477 each coordinate Zn(2+). Residues 411–424 carry the JAMM motif motif; that stretch reads HTHPTQSCFMSSID.

It belongs to the peptidase M67C family. Zn(2+) is required as a cofactor.

Its subcellular location is the membrane. It localises to the cytoplasm. Zinc metalloprotease that cleaves 'Lys-48'- and 'Lys-63'-linked polyubiquitin chains. The chain is AMSH-like ubiquitin thioesterase 1 (AMSH1) from Arabidopsis thaliana (Mouse-ear cress).